We begin with the raw amino-acid sequence, 258 residues long: E3 ubiquitin ligase TRIM40 (258 aa).

The RING-type zinc finger occupies cysteine 14–cysteine 56. The segment at glycine 66–isoleucine 107 adopts a B box-type zinc-finger fold. Cysteine 71, histidine 74, cysteine 93, and histidine 99 together coordinate Zn(2+). Residues isoleucine 107–alanine 159 are a coiled coil.

Belongs to the TRIM/RBCC family. Interacts with NEDD8. In terms of tissue distribution, highly expressed in normal gastrointestinal epithelia but that is down-regulated in gastrointestinal carcinomas and chronic inflammatory lesions of the gastrointestinal tract.

The catalysed reaction is S-ubiquitinyl-[E2 ubiquitin-conjugating enzyme]-L-cysteine + [acceptor protein]-L-lysine = [E2 ubiquitin-conjugating enzyme]-L-cysteine + N(6)-ubiquitinyl-[acceptor protein]-L-lysine.. E3 ubiquitin-protein ligase that plays a role in the limitation of the innate immune response. Mediates inhibition of the RLR signaling pathway by ubiquitinating RIGI and IFIH1 receptors, leading to their proteasomal degradation. Also promotes the neddylation of IKBKG/NEMO, stabilizing NFKBIA, and thereby inhibiting of NF-kappa-B nuclear translocation and activation. The polypeptide is E3 ubiquitin ligase TRIM40 (TRIM40) (Homo sapiens (Human)).